The chain runs to 57 residues: Large ribosomal subunit protein uL30 (57 aa).

This sequence belongs to the universal ribosomal protein uL30 family. As to quaternary structure, part of the 50S ribosomal subunit.

The protein is Large ribosomal subunit protein uL30 of Buchnera aphidicola subsp. Cinara cedri (strain Cc).